A 109-amino-acid chain; its full sequence is Parvalbumin alpha (109 aa).

Ser-1 is subject to N-acetylserine. EF-hand domains are found at residues 38-73 (KSDA…FSDG) and 77-109 (LNDK…AKMT). Residues Asp-51, Asp-53, Ser-55, Tyr-57, Glu-59, Glu-62, Asp-90, Asp-92, Asp-94, Lys-96, and Glu-101 each coordinate Ca(2+).

Belongs to the parvalbumin family. In terms of assembly, monomer.

Functionally, in muscle, parvalbumin is thought to be involved in relaxation after contraction. It binds two calcium ions. In Raja clavata (Thornback ray), this protein is Parvalbumin alpha.